The following is a 64-amino-acid chain: Ferredoxin-2 (64 aa).

The region spanning 2 to 29 (RIHVDQDKCCGAGSCVLAAPDVFDQREE) is the 4Fe-4S ferredoxin-type domain. Residues C10, C16, and C55 each contribute to the [3Fe-4S] cluster site.

It depends on [3Fe-4S] cluster as a cofactor.

Its function is as follows. Electron transport protein for the cytochrome P-450-SU2 system. The sequence is that of Ferredoxin-2 (subB) from Streptomyces griseolus.